The chain runs to 49 residues: Omega-segestritoxin-Sf1a (49 aa).

Intrachain disulfides connect Cys3–Cys22, Cys10–Cys27, Cys21–Cys48, and Cys29–Cys46.

In terms of tissue distribution, expressed by the venom gland.

The protein resides in the secreted. In terms of biological role, potent and selective blocker of N-type voltage-gated calcium channels (Cav2.2/CACNA1B). Also blocks vertebrate Cav2.1/CACNA1A (P/Q-type) and Cav1.2/CACNA1C (L-type) channels at very high concentration (2 micromolar). The sequence is that of Omega-segestritoxin-Sf1a from Segestria florentina (Tube-web spider).